Here is a 358-residue protein sequence, read N- to C-terminus: U5 small nuclear ribonucleoprotein 40 kDa protein (358 aa).

Lys-18 is covalently cross-linked (Glycyl lysine isopeptide (Lys-Gly) (interchain with G-Cter in SUMO2)). At Arg-21 the chain carries Asymmetric dimethylarginine. WD repeat units lie at residues Gly-65–Ala-104, Gly-108–Arg-147, Gly-150–Thr-190, Gln-192–Thr-231, Gly-234–Arg-273, Asn-284–Lys-323, and Gly-326–Gln-358. A Glycyl lysine isopeptide (Lys-Gly) (interchain with G-Cter in SUMO2) cross-link involves residue Lys-271.

As to quaternary structure, component of the pre-catalytic and catalytic spliceosome complexes. Component of the postcatalytic spliceosome P complex. Part of the U5 snRNP complex. Interacts with PRPF8. Component of the U4/U6-U5 tri-snRNP complex composed of the U4, U6 and U5 snRNAs and at least PRPF3, PRPF4, PRPF6, PRPF8, PRPF31, SNRNP200, TXNL4A, WDR57, SNRNP40, DDX23, CD2BP2, PPIH, SNU13, EFTUD2, SART1 and USP39. Component of the minor spliceosome, which splices U12-type introns.

The protein localises to the nucleus. In terms of biological role, required for pre-mRNA splicing as component of the activated spliceosome. Component of the U5 small nuclear ribonucleoprotein (snRNP) complex and the U4/U6-U5 tri-snRNP complex, building blocks of the spliceosome. As a component of the minor spliceosome, involved in the splicing of U12-type introns in pre-mRNAs. The sequence is that of U5 small nuclear ribonucleoprotein 40 kDa protein (Snrnp40) from Mus musculus (Mouse).